A 473-amino-acid polypeptide reads, in one-letter code: Uronate isomerase (473 aa).

Belongs to the metallo-dependent hydrolases superfamily. Uronate isomerase family.

The catalysed reaction is D-glucuronate = D-fructuronate. It catalyses the reaction aldehydo-D-galacturonate = keto-D-tagaturonate. It participates in carbohydrate metabolism; pentose and glucuronate interconversion. This is Uronate isomerase (uxaC) from Bacillus subtilis (strain 168).